A 137-amino-acid chain; its full sequence is Probable 4-amino-4-deoxy-L-arabinose-phosphoundecaprenol flippase subunit ArnF (137 aa).

3 helical membrane passes run 43–63 (AIAVICASITAYALSMLFWLL), 74–94 (YSLLSISYALVYTLAATLPFF), and 98–118 (FTVSKTVGVTLIVAGVLTINL).

Belongs to the ArnF family. As to quaternary structure, heterodimer of ArnE and ArnF.

It localises to the cell inner membrane. Its pathway is bacterial outer membrane biogenesis; lipopolysaccharide biosynthesis. Translocates 4-amino-4-deoxy-L-arabinose-phosphoundecaprenol (alpha-L-Ara4N-phosphoundecaprenol) from the cytoplasmic to the periplasmic side of the inner membrane. This chain is Probable 4-amino-4-deoxy-L-arabinose-phosphoundecaprenol flippase subunit ArnF, found in Pseudomonas savastanoi pv. phaseolicola (strain 1448A / Race 6) (Pseudomonas syringae pv. phaseolicola (strain 1448A / Race 6)).